Consider the following 156-residue polypeptide: Small ribosomal subunit protein uS7 (156 aa).

Belongs to the universal ribosomal protein uS7 family. Part of the 30S ribosomal subunit. Contacts proteins S9 and S11.

In terms of biological role, one of the primary rRNA binding proteins, it binds directly to 16S rRNA where it nucleates assembly of the head domain of the 30S subunit. Is located at the subunit interface close to the decoding center, probably blocks exit of the E-site tRNA. The chain is Small ribosomal subunit protein uS7 from Kineococcus radiotolerans (strain ATCC BAA-149 / DSM 14245 / SRS30216).